The chain runs to 241 residues: GDSL esterase/lipase At5g45920 (241 aa).

Ser12 functions as the Nucleophile in the catalytic mechanism. Catalysis depends on residues Asp189 and His192.

It belongs to the 'GDSL' lipolytic enzyme family.

The protein is GDSL esterase/lipase At5g45920 of Arabidopsis thaliana (Mouse-ear cress).